We begin with the raw amino-acid sequence, 657 residues long: Acetyl-coenzyme A synthetase (657 aa).

CoA contacts are provided by residues 192–195 (RRGK) and T311. ATP-binding positions include 387–389 (GEP), 411–416 (DTWWQT), D504, R519, and R530. Residues H543 and V546 each contribute to the Mg(2+) site. R592 contacts CoA. K617 bears the N6-acetyllysine mark.

It belongs to the ATP-dependent AMP-binding enzyme family. It depends on Mg(2+) as a cofactor. Acetylated. Deacetylation by the SIR2-homolog deacetylase activates the enzyme.

The enzyme catalyses acetate + ATP + CoA = acetyl-CoA + AMP + diphosphate. Its function is as follows. Catalyzes the conversion of acetate into acetyl-CoA (AcCoA), an essential intermediate at the junction of anabolic and catabolic pathways. AcsA undergoes a two-step reaction. In the first half reaction, AcsA combines acetate with ATP to form acetyl-adenylate (AcAMP) intermediate. In the second half reaction, it can then transfer the acetyl group from AcAMP to the sulfhydryl group of CoA, forming the product AcCoA. The polypeptide is Acetyl-coenzyme A synthetase (Campylobacter jejuni subsp. jejuni serotype O:6 (strain 81116 / NCTC 11828)).